A 90-amino-acid polypeptide reads, in one-letter code: Acylphosphatase (90 aa).

Positions 4-90 (TVHLRITGHV…KGQYKDFRIY (87 aa)) constitute an Acylphosphatase-like domain. Residues Arg-19 and Asn-37 contribute to the active site.

This sequence belongs to the acylphosphatase family.

It catalyses the reaction an acyl phosphate + H2O = a carboxylate + phosphate + H(+). The sequence is that of Acylphosphatase (acyP) from Caldanaerobacter subterraneus subsp. tengcongensis (strain DSM 15242 / JCM 11007 / NBRC 100824 / MB4) (Thermoanaerobacter tengcongensis).